Consider the following 449-residue polypeptide: Glucose-6-phosphate isomerase (449 aa).

Residue Glu-291 is the Proton donor of the active site. Active-site residues include His-312 and Lys-426.

This sequence belongs to the GPI family.

Its subcellular location is the cytoplasm. The enzyme catalyses alpha-D-glucose 6-phosphate = beta-D-fructose 6-phosphate. The protein operates within carbohydrate biosynthesis; gluconeogenesis. It participates in carbohydrate degradation; glycolysis; D-glyceraldehyde 3-phosphate and glycerone phosphate from D-glucose: step 2/4. Its function is as follows. Catalyzes the reversible isomerization of glucose-6-phosphate to fructose-6-phosphate. In Streptococcus pyogenes serotype M5 (strain Manfredo), this protein is Glucose-6-phosphate isomerase.